Reading from the N-terminus, the 339-residue chain is MRILEEDLKNSTYRIRIESLDDLWYLRNILSEGDEVSAITFRRVEESADVQRSRERERIPITIRLKVEKIEFQDFDNRLRILGTVIEGPEDTKGKHQSITVTVDSEISITKEWDDQHIDLLKEATDEKYVTVYTAVAMDEDEAQIFLIHPYGIQQVGTVYSGRSGKYAEGNYSEASYFDQIVNALKNYSNSIIILGPGFARDRFARYCAQRGVNVIGSFPANRTDSGAVYEFITSADGAKLLSNERIARDKEIVDEFLVAVKKDMGVYGRDQTESALQMGALSDLIITDEMFRTEDGRRSLSIAQTVGTRIHIVSVSNDPGQIVKKFGGFAGILRYRVQ.

Belongs to the eukaryotic release factor 1 family. Pelota subfamily. Monomer. A divalent metal cation is required as a cofactor.

The protein localises to the cytoplasm. Functionally, may function in recognizing stalled ribosomes, interact with stem-loop structures in stalled mRNA molecules, and effect endonucleolytic cleavage of the mRNA. May play a role in the release non-functional ribosomes and degradation of damaged mRNAs. Has endoribonuclease activity. This is Protein pelota homolog (pelA) from Thermoplasma acidophilum (strain ATCC 25905 / DSM 1728 / JCM 9062 / NBRC 15155 / AMRC-C165).